The chain runs to 452 residues: UDP-N-acetylmuramoylalanine--D-glutamate ligase (452 aa).

119-125 is a binding site for ATP; that stretch reads GSNGKTT.

Belongs to the MurCDEF family.

The protein resides in the cytoplasm. The enzyme catalyses UDP-N-acetyl-alpha-D-muramoyl-L-alanine + D-glutamate + ATP = UDP-N-acetyl-alpha-D-muramoyl-L-alanyl-D-glutamate + ADP + phosphate + H(+). It participates in cell wall biogenesis; peptidoglycan biosynthesis. Its function is as follows. Cell wall formation. Catalyzes the addition of glutamate to the nucleotide precursor UDP-N-acetylmuramoyl-L-alanine (UMA). This Streptococcus pyogenes serotype M12 (strain MGAS9429) protein is UDP-N-acetylmuramoylalanine--D-glutamate ligase.